Here is a 754-residue protein sequence, read N- to C-terminus: 5-methyltetrahydropteroyltriglutamate--homocysteine methyltransferase (754 aa).

Residues 17-20 (RELK) and Lys117 contribute to the 5-methyltetrahydropteroyltri-L-glutamate site. L-homocysteine-binding positions include 431–433 (IGS) and Glu484. Residues 431–433 (IGS) and Glu484 each bind L-methionine. 5-methyltetrahydropteroyltri-L-glutamate contacts are provided by residues 515-516 (RC) and Trp561. Asp599 provides a ligand contact to L-homocysteine. Asp599 serves as a coordination point for L-methionine. Glu605 provides a ligand contact to 5-methyltetrahydropteroyltri-L-glutamate. Residues His641, Cys643, and Glu665 each coordinate Zn(2+). The active-site Proton donor is His694. Zn(2+) is bound at residue Cys726.

Belongs to the vitamin-B12 independent methionine synthase family. It depends on Zn(2+) as a cofactor.

It carries out the reaction 5-methyltetrahydropteroyltri-L-glutamate + L-homocysteine = tetrahydropteroyltri-L-glutamate + L-methionine. The protein operates within amino-acid biosynthesis; L-methionine biosynthesis via de novo pathway; L-methionine from L-homocysteine (MetE route): step 1/1. Its function is as follows. Catalyzes the transfer of a methyl group from 5-methyltetrahydrofolate to homocysteine resulting in methionine formation. This Pectobacterium atrosepticum (strain SCRI 1043 / ATCC BAA-672) (Erwinia carotovora subsp. atroseptica) protein is 5-methyltetrahydropteroyltriglutamate--homocysteine methyltransferase.